The chain runs to 141 residues: Nucleoside diphosphate kinase (141 aa).

Residues lysine 9, phenylalanine 57, arginine 85, threonine 91, arginine 102, and asparagine 112 each contribute to the ATP site. Histidine 115 serves as the catalytic Pros-phosphohistidine intermediate.

It belongs to the NDK family. Homotetramer. It depends on Mg(2+) as a cofactor.

It is found in the cytoplasm. It catalyses the reaction a 2'-deoxyribonucleoside 5'-diphosphate + ATP = a 2'-deoxyribonucleoside 5'-triphosphate + ADP. The catalysed reaction is a ribonucleoside 5'-diphosphate + ATP = a ribonucleoside 5'-triphosphate + ADP. In terms of biological role, major role in the synthesis of nucleoside triphosphates other than ATP. The ATP gamma phosphate is transferred to the NDP beta phosphate via a ping-pong mechanism, using a phosphorylated active-site intermediate. This chain is Nucleoside diphosphate kinase, found in Chlamydia trachomatis serovar L2 (strain ATCC VR-902B / DSM 19102 / 434/Bu).